The chain runs to 46 residues: MNCLKICGFFFALIAALATAEAGTQVIHAGGHTLIQTDRSQYIRKN.

The N-terminal stretch at 1-22 (MNCLKICGFFFALIAALATAEA) is a signal peptide.

Hemolymph (at protein level).

The protein localises to the secreted. Its function is as follows. Peptide which plays a role in the humoral immune response to a subset of filamentous fungi, including F.oxysporum and F.verticillioides. The polypeptide is Daisho2 (Drosophila melanogaster (Fruit fly)).